An 855-amino-acid polypeptide reads, in one-letter code: Dynein axonemal assembly factor 5 (855 aa).

Ala-2 is modified (N-acetylalanine). HEAT repeat units follow at residues 71–109 (GPWARLLLPRLLRCLSDPAEGCRALAVHLLDLGLRRAAR), 202–240 (HMQSESLIGPLMQTISHQHWKVRVAAIEATGAVIHFGNG), 241–278 (KSVDDVLSHFAQRLFDDVPQVRRAVASVVGGWLLCLRD), 280–318 (YSFFHKLIPLLLSSLNDEVPEVRQLAASLWEDVGLQWQK), 354–376 (FRNLSKILPALCHDITDWVVGTR), 377–414 (VKSAQLLPVLLLHAEDHATQHLEVVLRTLFQACTDEEA), 599–638 (GEALPHVVPTLRACLQPSQDPQMRLKLFSILSTVLLRATD), 696–734 (RDVQETLMPQVLTTLEEDSKMTRLISCRIINTFLKTSGG), 738–776 (PEKLIRIYPELLKRLDDVSNDVRMAAASTLVTWLQCVKG), and 784–822 (QSSVQYLYRELLVHLDDPERAIQDAILEVLKEGSGLFPD).

It belongs to the DNAAF5 family. As to quaternary structure, interacts with DNAI2; probably involved in outer arm dynein assembly. In terms of tissue distribution, expressed in nasal epithelium and lung epithelium by ciliated cells (at protein level).

The protein resides in the cytoplasm. The protein localises to the dynein axonemal particle. In terms of biological role, cytoplasmic protein involved in the delivery of the dynein machinery to the motile cilium. It is required for the assembly of the axonemal dynein inner and outer arms, two structures attached to the peripheral outer doublet A microtubule of the axoneme, that play a crucial role in cilium motility. This Homo sapiens (Human) protein is Dynein axonemal assembly factor 5.